The following is a 364-amino-acid chain: UDP-N-acetylglucosamine--N-acetylmuramyl-(pentapeptide) pyrophosphoryl-undecaprenol N-acetylglucosamine transferase (364 aa).

Residues 10 to 12 (TGG), N128, R170, S199, I250, and Q295 each bind UDP-N-acetyl-alpha-D-glucosamine.

It belongs to the glycosyltransferase 28 family. MurG subfamily.

It localises to the cell inner membrane. It catalyses the reaction di-trans,octa-cis-undecaprenyl diphospho-N-acetyl-alpha-D-muramoyl-L-alanyl-D-glutamyl-meso-2,6-diaminopimeloyl-D-alanyl-D-alanine + UDP-N-acetyl-alpha-D-glucosamine = di-trans,octa-cis-undecaprenyl diphospho-[N-acetyl-alpha-D-glucosaminyl-(1-&gt;4)]-N-acetyl-alpha-D-muramoyl-L-alanyl-D-glutamyl-meso-2,6-diaminopimeloyl-D-alanyl-D-alanine + UDP + H(+). The protein operates within cell wall biogenesis; peptidoglycan biosynthesis. Functionally, cell wall formation. Catalyzes the transfer of a GlcNAc subunit on undecaprenyl-pyrophosphoryl-MurNAc-pentapeptide (lipid intermediate I) to form undecaprenyl-pyrophosphoryl-MurNAc-(pentapeptide)GlcNAc (lipid intermediate II). In Chlorobaculum parvum (strain DSM 263 / NCIMB 8327) (Chlorobium vibrioforme subsp. thiosulfatophilum), this protein is UDP-N-acetylglucosamine--N-acetylmuramyl-(pentapeptide) pyrophosphoryl-undecaprenol N-acetylglucosamine transferase.